The sequence spans 623 residues: Chaperone protein DnaK (623 aa).

T175 carries the post-translational modification Phosphothreonine; by autocatalysis. The interval 578–623 (ANPEGAPGAGFDPNNMGGANAGNASAGNDKKDDNVVDADFKVEDDK) is disordered. Residues 591–604 (NNMGGANAGNASAG) are compositionally biased toward low complexity. Residues 605-623 (NDKKDDNVVDADFKVEDDK) show a composition bias toward basic and acidic residues.

It belongs to the heat shock protein 70 family.

Acts as a chaperone. In Clostridium botulinum (strain 657 / Type Ba4), this protein is Chaperone protein DnaK.